Reading from the N-terminus, the 388-residue chain is Subtilisin-like serine protease AsES (388 aa).

The N-terminal stretch at 1-15 (MRLSLVLALLPVAFG) is a signal peptide. A propeptide spans 16-105 (APTRRDEPAP…IEQDAIVTLA (90 aa)) (removed in mature form). In terms of domain architecture, Peptidase S8 spans 114-388 (PWGLARISTR…RLAFNGNPSG (275 aa)). Cysteines 141 and 230 form a disulfide. Residues aspartate 146 and histidine 176 each act as charge relay system in the active site. 2 N-linked (GlcNAc...) asparagine glycosylation sites follow: asparagine 232 and asparagine 237. A disulfide bridge connects residues cysteine 285 and cysteine 357. Serine 331 serves as the catalytic Charge relay system.

This sequence belongs to the peptidase S8 family.

Its subcellular location is the secreted. The elicitor proteolytic activity is completely inhibited by PMSF. The activity is also significantly reduced by aprotinin (leading to 37% residual activity), by leupeptin (leading to 54% residual activity), by the ovomucoid trypsin inhibitor (leading to 65% residual activity), and by p-aminobenzamidine (leading to 26% residual activity). Its function is as follows. Extracellular elicitor protein that induces a strong defense response in strawberry and confers both local and systemic plant resistance against the fungal pathogen Colletotricum acutatum, the casual agent of anthracnose disease. AsES activates a cascade of defense responses, including calcium influx, oxidative burst, hypersensitive cell-death response (HR), accumulation of autofluorescent compounds, cell-wall reinforcement with callose and lignin deposition, salicylic acid accumulation, and expression of defense-related genes, such as PR1, PG1, MYB30, RBOH-D, RBOH-F, CHI23, and FLS. The oxidative burst consists in a progressive extracellular accumulation of H(2)O(2) that starts immediately after the contact with AsES and is preceded by a rapid and transient cell membrane depolarization. During this phase takes place also a rapid intracellular accumulation of NO at the chloroplasts. After the first extracellular H(2)O(2) production phase, two intracellular H(2)O(2) accumulation events occur, the first 2 hours after induction, and the second 7 hours after induction. AsES also produces a transient increase of ion leakage, and a progressive alkalinization of the extracellular medium. Confers also local and systemic plant resistance against Botrytis cinerea in Arabidopsis thaliana. Systemic, but not local resistance is dependent on the length of exposure to AsES. The protection to B.cinerea is due to the induction of the plant defenses via the salicylic acid, jasmonic acid and ethylene signaling pathways. Exhibits subtilisin-like proteolytic activity which is necessary but not sufficient for its elicitor function in strawberry plants. Probably induces defense by means of proteolysis of one or multiple host proteins that are specific targets of this protease. This is Subtilisin-like serine protease AsES from Sarocladium strictum (Black bundle disease fungus).